Reading from the N-terminus, the 207-residue chain is Elongation factor 1-beta (207 aa).

The residue at position 2 (Ala2) is an N-acetylalanine. Positions 70-96 (FPGIPTSASKEEDDDVDLFGSDEEDEE) are disordered. Positions 80-96 (EEDDDVDLFGSDEEDEE) are enriched in acidic residues. At Ser90 the chain carries Phosphoserine; by CK2.

This sequence belongs to the EF-1-beta/EF-1-delta family. EF-1 is composed of 4 subunits: alpha, beta, delta, and gamma. In terms of processing, phosphorylation affects the GDP/GTP exchange rate.

EF-1-beta and EF-1-delta stimulate the exchange of GDP bound to EF-1-alpha to GTP. The sequence is that of Elongation factor 1-beta from Artemia salina (Brine shrimp).